We begin with the raw amino-acid sequence, 339 residues long: Lipoate-protein ligase A (339 aa).

In terms of domain architecture, BPL/LPL catalytic spans 28 to 211; sequence NPDSHTLFLW…AFREYYRDTD (184 aa). ATP contacts are provided by residues arginine 70, 75-78, and lysine 129; that span reads GAVF. Residue lysine 129 coordinates (R)-lipoate.

Belongs to the LplA family. As to quaternary structure, monomer.

The protein localises to the cytoplasm. It catalyses the reaction L-lysyl-[lipoyl-carrier protein] + (R)-lipoate + ATP = N(6)-[(R)-lipoyl]-L-lysyl-[lipoyl-carrier protein] + AMP + diphosphate + H(+). The protein operates within protein modification; protein lipoylation via exogenous pathway; protein N(6)-(lipoyl)lysine from lipoate: step 1/2. It functions in the pathway protein modification; protein lipoylation via exogenous pathway; protein N(6)-(lipoyl)lysine from lipoate: step 2/2. Catalyzes both the ATP-dependent activation of exogenously supplied lipoate to lipoyl-AMP and the transfer of the activated lipoyl onto the lipoyl domains of lipoate-dependent enzymes. The sequence is that of Lipoate-protein ligase A from Psychrobacter cryohalolentis (strain ATCC BAA-1226 / DSM 17306 / VKM B-2378 / K5).